The sequence spans 210 residues: Na(+)-translocating NADH-quinone reductase subunit D (210 aa).

6 consecutive transmembrane segments (helical) span residues isoleucine 10–serine 30, phenylalanine 42–isoleucine 62, isoleucine 72–alanine 92, valine 103–methionine 123, phenylalanine 131–phenylalanine 151, and asparagine 178–isoleucine 198.

It belongs to the NqrDE/RnfAE family. In terms of assembly, composed of six subunits; NqrA, NqrB, NqrC, NqrD, NqrE and NqrF.

Its subcellular location is the cell inner membrane. It catalyses the reaction a ubiquinone + n Na(+)(in) + NADH + H(+) = a ubiquinol + n Na(+)(out) + NAD(+). Its function is as follows. NQR complex catalyzes the reduction of ubiquinone-1 to ubiquinol by two successive reactions, coupled with the transport of Na(+) ions from the cytoplasm to the periplasm. NqrA to NqrE are probably involved in the second step, the conversion of ubisemiquinone to ubiquinol. The chain is Na(+)-translocating NADH-quinone reductase subunit D from Photobacterium profundum (strain SS9).